Here is a 494-residue protein sequence, read N- to C-terminus: Catalase A (494 aa).

A compositionally biased stretch (polar residues) spans 1–23 (MTDRPTITTTAGAPVPDNQNSLT). Positions 1–25 (MTDRPTITTTAGAPVPDNQNSLTAG) are disordered. Residues His-55 and Asn-127 contribute to the active site. Tyr-337 contacts heme.

The protein belongs to the catalase family. Requires heme as cofactor.

Its subcellular location is the periplasm. It catalyses the reaction 2 H2O2 = O2 + 2 H2O. Decomposes hydrogen peroxide into water and oxygen; serves to protect cells from the toxic effects of hydrogen peroxide. The polypeptide is Catalase A (katA) (Rhizobium meliloti (strain 1021) (Ensifer meliloti)).